An 852-amino-acid chain; its full sequence is Gamma-tubulin complex component 2 homolog (852 aa).

Ser-73 carries the phosphoserine modification.

This sequence belongs to the TUBGCP family. In terms of assembly, gamma-tubulin small complex (Gamma TuSC) is a heterotetrameric complex which contains two molecules of gamma-tubulin, and one molecule each of Dgrip84 and Dgrip91. The gamma-tubulin in this complex binds preferentially to GDP over GTP.

The protein localises to the cytoplasm. Its subcellular location is the cytoskeleton. It localises to the microtubule organizing center. The protein resides in the centrosome. It is found in the perinuclear region. This Drosophila melanogaster (Fruit fly) protein is Gamma-tubulin complex component 2 homolog (Grip84).